The primary structure comprises 142 residues: Succinate dehydrogenase subunit 6, mitochondrial (142 aa).

Residue glycine 2 is modified to N-acetylglycine.

Component of complex II composed of eight subunits in plants: four classical SDH subunits SDH1, SDH2, SDH3 and SDH4 (a flavoprotein (FP), an iron-sulfur protein (IP), and a cytochrome b composed of a large and a small subunit.), as well as four subunits unknown in mitochondria from bacteria and heterotrophic eukaryotes.

It localises to the mitochondrion inner membrane. Its pathway is carbohydrate metabolism; tricarboxylic acid cycle. The sequence is that of Succinate dehydrogenase subunit 6, mitochondrial from Arabidopsis thaliana (Mouse-ear cress).